The primary structure comprises 878 residues: DNA gyrase subunit A (878 aa).

In terms of domain architecture, Topo IIA-type catalytic spans 34–533 (LPDVRDGLKP…NSADINIEDL (500 aa)). Catalysis depends on Tyr-122, which acts as the O-(5'-phospho-DNA)-tyrosine intermediate. The GyrA-box motif lies at 560-566 (QRRGGKG). The tract at residues 844-878 (DDEELDAIDGSVAEGDEDIAPEAESDDDVADDADE) is disordered. A compositionally biased stretch (acidic residues) spans 857–878 (EGDEDIAPEAESDDDVADDADE).

It belongs to the type II topoisomerase GyrA/ParC subunit family. As to quaternary structure, heterotetramer, composed of two GyrA and two GyrB chains. In the heterotetramer, GyrA contains the active site tyrosine that forms a transient covalent intermediate with DNA, while GyrB binds cofactors and catalyzes ATP hydrolysis.

Its subcellular location is the cytoplasm. It carries out the reaction ATP-dependent breakage, passage and rejoining of double-stranded DNA.. A type II topoisomerase that negatively supercoils closed circular double-stranded (ds) DNA in an ATP-dependent manner to modulate DNA topology and maintain chromosomes in an underwound state, and also catalyzes the interconversion of other topological isomers of double-stranded DNA rings, including catenanes and knotted rings. Replenishes negative supercoiling downstream of highly transcribed genes to help control overall chromosomal supercoiling density. E.coli makes 15% more negative supercoils in pBR322 plasmid DNA than S.typhimurium; the S.typhimurium GyrB subunit is toxic in E.coli, while the E.coli copy can be expressed in S.typhimurium even though the 2 subunits have 777/804 residues identical. In terms of biological role, negative supercoiling favors strand separation, and DNA replication, transcription, recombination and repair, all of which involve strand separation. Type II topoisomerases break and join 2 DNA strands simultaneously in an ATP-dependent manner. The polypeptide is DNA gyrase subunit A (Salmonella typhimurium (strain LT2 / SGSC1412 / ATCC 700720)).